Reading from the N-terminus, the 155-residue chain is 6,7-dimethyl-8-ribityllumazine synthase (155 aa).

Residues Phe-24, 58-60 (AFE), and 82-84 (VII) each bind 5-amino-6-(D-ribitylamino)uracil. 87 to 88 (ST) is a (2S)-2-hydroxy-3-oxobutyl phosphate binding site. His-90 functions as the Proton donor in the catalytic mechanism. A 5-amino-6-(D-ribitylamino)uracil-binding site is contributed by Phe-115. A (2S)-2-hydroxy-3-oxobutyl phosphate-binding site is contributed by Arg-129.

The protein belongs to the DMRL synthase family.

It catalyses the reaction (2S)-2-hydroxy-3-oxobutyl phosphate + 5-amino-6-(D-ribitylamino)uracil = 6,7-dimethyl-8-(1-D-ribityl)lumazine + phosphate + 2 H2O + H(+). Its pathway is cofactor biosynthesis; riboflavin biosynthesis; riboflavin from 2-hydroxy-3-oxobutyl phosphate and 5-amino-6-(D-ribitylamino)uracil: step 1/2. Its function is as follows. Catalyzes the formation of 6,7-dimethyl-8-ribityllumazine by condensation of 5-amino-6-(D-ribitylamino)uracil with 3,4-dihydroxy-2-butanone 4-phosphate. This is the penultimate step in the biosynthesis of riboflavin. The sequence is that of 6,7-dimethyl-8-ribityllumazine synthase from Chlorobaculum tepidum (strain ATCC 49652 / DSM 12025 / NBRC 103806 / TLS) (Chlorobium tepidum).